Here is a 348-residue protein sequence, read N- to C-terminus: Holliday junction branch migration complex subunit RuvB (348 aa).

A large ATPase domain (RuvB-L) region spans residues 1–184; sequence MTLNRDMVSP…FGIVQRLEFY (184 aa). ATP-binding residues include L23, R24, G65, K68, T69, T70, R174, Y184, and R221. A Mg(2+)-binding site is contributed by T69. The tract at residues 185 to 255 is small ATPAse domain (RuvB-S); it reads AVDHLVLIVE…VAQKALDLLD (71 aa). The interval 258 to 348 is head domain (RuvB-H); sequence SHGFDTMDRK…QEVSDLFPNE (91 aa). R294, R313, and R318 together coordinate DNA.

Belongs to the RuvB family. As to quaternary structure, homohexamer. Forms an RuvA(8)-RuvB(12)-Holliday junction (HJ) complex. HJ DNA is sandwiched between 2 RuvA tetramers; dsDNA enters through RuvA and exits via RuvB. An RuvB hexamer assembles on each DNA strand where it exits the tetramer. Each RuvB hexamer is contacted by two RuvA subunits (via domain III) on 2 adjacent RuvB subunits; this complex drives branch migration. In the full resolvosome a probable DNA-RuvA(4)-RuvB(12)-RuvC(2) complex forms which resolves the HJ.

Its subcellular location is the cytoplasm. It carries out the reaction ATP + H2O = ADP + phosphate + H(+). The RuvA-RuvB-RuvC complex processes Holliday junction (HJ) DNA during genetic recombination and DNA repair, while the RuvA-RuvB complex plays an important role in the rescue of blocked DNA replication forks via replication fork reversal (RFR). RuvA specifically binds to HJ cruciform DNA, conferring on it an open structure. The RuvB hexamer acts as an ATP-dependent pump, pulling dsDNA into and through the RuvAB complex. RuvB forms 2 homohexamers on either side of HJ DNA bound by 1 or 2 RuvA tetramers; 4 subunits per hexamer contact DNA at a time. Coordinated motions by a converter formed by DNA-disengaged RuvB subunits stimulates ATP hydrolysis and nucleotide exchange. Immobilization of the converter enables RuvB to convert the ATP-contained energy into a lever motion, pulling 2 nucleotides of DNA out of the RuvA tetramer per ATP hydrolyzed, thus driving DNA branch migration. The RuvB motors rotate together with the DNA substrate, which together with the progressing nucleotide cycle form the mechanistic basis for DNA recombination by continuous HJ branch migration. Branch migration allows RuvC to scan DNA until it finds its consensus sequence, where it cleaves and resolves cruciform DNA. The polypeptide is Holliday junction branch migration complex subunit RuvB (Nitrosococcus oceani (strain ATCC 19707 / BCRC 17464 / JCM 30415 / NCIMB 11848 / C-107)).